The primary structure comprises 103 residues: Histone H4 (103 aa).

The span at 1 to 14 (MSGRGKGGKGLGKG) shows a compositional bias: gly residues. The tract at residues 1 to 20 (MSGRGKGGKGLGKGGAKRHR) is disordered. N6-(2-hydroxyisobutyryl)lysine; alternate is present on residues Lys6, Lys9, Lys13, Lys17, Lys32, and Lys45. Lys6 is subject to N6-acetyl-N6-methyllysine; alternate. Residues Lys6, Lys9, Lys13, Lys17, Lys32, and Lys45 each carry the N6-butyryllysine; alternate modification. Residue Lys6 is modified to N6-glutaryllysine; alternate. Lys9 bears the N6-propionyllysine; alternate mark. Lys13 is modified (N6-acetyl-N6-methyllysine; alternate). Lys13 bears the N6-glutaryllysine; alternate mark. 3 positions are modified to N6-propionyllysine; alternate: Lys17, Lys32, and Lys45. A DNA-binding region spans residues 17 to 21 (KRHRK). Lys32 carries the N6-glutaryllysine; alternate modification. Lys32 is modified (N6-succinyllysine; alternate). 4 positions are modified to N6-glutaryllysine; alternate: Lys60, Lys78, Lys80, and Lys92. Position 60 is an N6-(2-hydroxyisobutyryl)lysine (Lys60). Lys78, Lys80, and Lys92 each carry N6-(2-hydroxyisobutyryl)lysine; alternate. An N6-butyryllysine; alternate mark is found at Lys78, Lys80, and Lys92. N6-propionyllysine; alternate occurs at positions 78, 80, and 92. An N6-succinyllysine modification is found at Lys78. At Lys92 the chain carries N6-succinyllysine; alternate.

It belongs to the histone H4 family. The nucleosome is a histone octamer containing two molecules each of H2A, H2B, H3 and H4 assembled in one H3-H4 heterotetramer and two H2A-H2B heterodimers. The octamer wraps approximately 147 bp of DNA. In terms of processing, butyrylation of histones marks active promoters and competes with histone acetylation. Post-translationally, glutarylation at Lys-92 (H4K91glu) destabilizes nucleosomes by promoting dissociation of the H2A-H2B dimers from nucleosomes.

It localises to the nucleus. Its subcellular location is the chromosome. Functionally, core component of nucleosome. Nucleosomes wrap and compact DNA into chromatin, limiting DNA accessibility to the cellular machineries which require DNA as a template. Histones thereby play a central role in transcription regulation, DNA repair, DNA replication and chromosomal stability. DNA accessibility is regulated via a complex set of post-translational modifications of histones, also called histone code, and nucleosome remodeling. The protein is Histone H4 (H4.1) of Oikopleura dioica (Tunicate).